Here is a 96-residue protein sequence, read N- to C-terminus: Aspartyl/glutamyl-tRNA(Asn/Gln) amidotransferase subunit C (96 aa).

Belongs to the GatC family. Heterotrimer of A, B and C subunits.

It carries out the reaction L-glutamyl-tRNA(Gln) + L-glutamine + ATP + H2O = L-glutaminyl-tRNA(Gln) + L-glutamate + ADP + phosphate + H(+). It catalyses the reaction L-aspartyl-tRNA(Asn) + L-glutamine + ATP + H2O = L-asparaginyl-tRNA(Asn) + L-glutamate + ADP + phosphate + 2 H(+). Its function is as follows. Allows the formation of correctly charged Asn-tRNA(Asn) or Gln-tRNA(Gln) through the transamidation of misacylated Asp-tRNA(Asn) or Glu-tRNA(Gln) in organisms which lack either or both of asparaginyl-tRNA or glutaminyl-tRNA synthetases. The reaction takes place in the presence of glutamine and ATP through an activated phospho-Asp-tRNA(Asn) or phospho-Glu-tRNA(Gln). This Wolinella succinogenes (strain ATCC 29543 / DSM 1740 / CCUG 13145 / JCM 31913 / LMG 7466 / NCTC 11488 / FDC 602W) (Vibrio succinogenes) protein is Aspartyl/glutamyl-tRNA(Asn/Gln) amidotransferase subunit C.